Consider the following 652-residue polypeptide: Vacuolar fusion protein MON1 homolog A (652 aa).

The disordered stretch occupies residues 102-141 (MQRKRSSECLDGTLTPSDGQSMERAESPTPGMAQGMEPGA). A phosphoserine mark is found at Ser-128 and Ser-153. Thr-158 is modified (phosphothreonine). The disordered stretch occupies residues 158–185 (TESEDGAASGDSHKEGTRGPPPLPTDMR). Phosphoserine is present on Ser-188. The interval 211 to 245 (PGSSEDWLEPPGAVGRPATEPPREGTTEGDEEDAT) is disordered.

This sequence belongs to the MON1/SAND family. As to quaternary structure, interacts with CCZ1. Found in a complex with RMC1, CCZ1, MON1A and MON1B. The MON1A-CCZ1B complex interacts with RIMOC1. The MON1A-CCZ1B complex interacts with RAB7A and this interaction is enhanced in the presence of RIMOC1.

Its function is as follows. Plays an important role in membrane trafficking through the secretory apparatus. Not involved in endocytic trafficking to lysosomes. Acts in concert with CCZ1, as a guanine exchange factor (GEF) for RAB7, promotes the exchange of GDP to GTP, converting it from an inactive GDP-bound form into an active GTP-bound form. The polypeptide is Vacuolar fusion protein MON1 homolog A (MON1A) (Homo sapiens (Human)).